Consider the following 156-residue polypeptide: MSRKNQAPKREVLPDPLYNSKIVTRLINRVMLDGKRGTAATIVYDAFEAIKEATGTDALEVFETAMENIMPVLEVRARRVGGSNYQVPVEVRPERRTTLGLRWLVNASRARGEHTMKDRLAKEIMDAANNTGASVKKREDTHKMAEANRAFAHFRW.

The protein belongs to the universal ribosomal protein uS7 family. In terms of assembly, part of the 30S ribosomal subunit. Contacts proteins S9 and S11.

Its function is as follows. One of the primary rRNA binding proteins, it binds directly to 16S rRNA where it nucleates assembly of the head domain of the 30S subunit. Is located at the subunit interface close to the decoding center, probably blocks exit of the E-site tRNA. In Streptococcus agalactiae serotype Ia (strain ATCC 27591 / A909 / CDC SS700), this protein is Small ribosomal subunit protein uS7.